We begin with the raw amino-acid sequence, 207 residues long: Ribonuclease HII (207 aa).

One can recognise an RNase H type-2 domain in the interval 18 to 207 (TYLSGSDEAG…PIKKISKETS (190 aa)). Residues aspartate 24, glutamate 25, and aspartate 116 each coordinate a divalent metal cation.

The protein belongs to the RNase HII family. Mn(2+) is required as a cofactor. Requires Mg(2+) as cofactor.

The protein resides in the cytoplasm. The catalysed reaction is Endonucleolytic cleavage to 5'-phosphomonoester.. Functionally, endonuclease that specifically degrades the RNA of RNA-DNA hybrids. This Mycoplasma mycoides subsp. mycoides SC (strain CCUG 32753 / NCTC 10114 / PG1) protein is Ribonuclease HII.